The primary structure comprises 74 residues: Sec-independent protein translocase protein TatA (74 aa).

The chain crosses the membrane as a helical span at residues Met1–Gly21. Residues Ala51 to Ala74 are disordered.

This sequence belongs to the TatA/E family. In terms of assembly, the Tat system comprises two distinct complexes: a TatABC complex, containing multiple copies of TatA, TatB and TatC subunits, and a separate TatA complex, containing only TatA subunits. Substrates initially bind to the TatABC complex, which probably triggers association of the separate TatA complex to form the active translocon.

It is found in the cell inner membrane. Its function is as follows. Part of the twin-arginine translocation (Tat) system that transports large folded proteins containing a characteristic twin-arginine motif in their signal peptide across membranes. TatA could form the protein-conducting channel of the Tat system. The protein is Sec-independent protein translocase protein TatA of Haemophilus ducreyi (strain 35000HP / ATCC 700724).